The following is a 507-amino-acid chain: MDVPCLWYSLLILLLLFIFLLIHHCFTTSKTQNMFLPPSPRKLPIIGNLHQLGSHPHRSLRKLSQKYGPVMLLHLGSKPVIVASSVDAARDILKTHDHVWATRPKYSIADSLLYGSKDVGFSPFGEYWWQVRSIVVLHLLSNKRVQSYRDVREEETANMIEKIRQGCDASVINLGEHLCFLTNNITSRVALGRTYDERESGIDAKDILEQFLQLLDTFNVGDYIPWLKWVNKITGLDTKVEKIAKKLDTFLDSVIEEHIIRNKKEEYAITDEAKDFVDVLLEIQNGKETDFPLQRDSLKAILLDAFAAGTDTIYTNLDWTMADVLRQPRAMKTLQNEVRGLAQGKSEITEDDLKNMQYLRAVIKESLRLHPPNSLLVPRESMEDVKLLGYYHIPARTQALINVWAIGRDPLSWENPEEFCPERFLNNDIDMKGLKFELLPFGSGRRGCPGSSFAIAVIELALARLVHKFNFALPKGTKPEDLDMTECTGIATRRKSPLPVVATPFSG.

Residues 3–23 (VPCLWYSLLILLLLFIFLLIH) form a helical membrane-spanning segment. Residue Cys448 coordinates heme.

This sequence belongs to the cytochrome P450 family. The cofactor is heme.

The protein resides in the membrane. In terms of biological role, may have a role in maturation, such as during flavor formation or other metabolite production specific to aging tissues. In Solanum melongena (Eggplant), this protein is Cytochrome P450 71A4 (CYP71A4).